Reading from the N-terminus, the 228-residue chain is Nuclear phosphoprotein UL3 homolog (228 aa).

It belongs to the alphaherpesvirinae HHV-1 UL3 family. Phosphorylated.

It localises to the host nucleus. The polypeptide is Nuclear phosphoprotein UL3 homolog (MDV015) (Gallus gallus (Chicken)).